Reading from the N-terminus, the 873-residue chain is Bifunctional uridylyltransferase/uridylyl-removing enzyme (873 aa).

Residues 1–332 form a uridylyltransferase region; sequence MKYLSPLSLS…HQGEQDDAII (332 aa). Residues 333-692 are uridylyl-removing; it reads IDDDFQRRGR…ISKNASRGGT (360 aa). Positions 451-573 constitute an HD domain; the sequence is VDEHSIRLLK…VRDEERLDYL (123 aa). ACT domains lie at 693–777 and 800–873; these read EIFV…RPPR and LMEF…RLSS.

This sequence belongs to the GlnD family. Requires Mg(2+) as cofactor.

The enzyme catalyses [protein-PII]-L-tyrosine + UTP = [protein-PII]-uridylyl-L-tyrosine + diphosphate. The catalysed reaction is [protein-PII]-uridylyl-L-tyrosine + H2O = [protein-PII]-L-tyrosine + UMP + H(+). With respect to regulation, uridylyltransferase (UTase) activity is inhibited by glutamine, while glutamine activates uridylyl-removing (UR) activity. Functionally, modifies, by uridylylation and deuridylylation, the PII regulatory proteins (GlnB and homologs), in response to the nitrogen status of the cell that GlnD senses through the glutamine level. Under low glutamine levels, catalyzes the conversion of the PII proteins and UTP to PII-UMP and PPi, while under higher glutamine levels, GlnD hydrolyzes PII-UMP to PII and UMP (deuridylylation). Thus, controls uridylylation state and activity of the PII proteins, and plays an important role in the regulation of nitrogen assimilation and metabolism. The protein is Bifunctional uridylyltransferase/uridylyl-removing enzyme of Aliivibrio fischeri (strain MJ11) (Vibrio fischeri).